The primary structure comprises 1846 residues: Insulin-like receptor (1846 aa).

N-linked (GlcNAc...) asparagine glycosylation is found at asparagine 113, asparagine 180, and asparagine 364. 5 cysteine pairs are disulfide-bonded: cysteine 371–cysteine 386, cysteine 393–cysteine 401, cysteine 397–cysteine 410, cysteine 413–cysteine 422, and cysteine 426–cysteine 438. Residue asparagine 453 is glycosylated (N-linked (GlcNAc...) asparagine). Cystine bridges form between cysteine 469–cysteine 483 and cysteine 486–cysteine 490. N-linked (GlcNAc...) asparagine glycosylation is present at asparagine 518. An intrachain disulfide couples cysteine 615 to cysteine 646. N-linked (GlcNAc...) asparagine glycans are attached at residues asparagine 652, asparagine 671, and asparagine 696. Fibronectin type-III domains follow at residues 775 to 869 (TPDP…TMMG), 969 to 1067 (KPSS…LKRT), and 1077 to 1179 (LNET…TPGF). The disordered stretch occupies residues 944–980 (EKAENLGKAPKTLGGKKPLIHISKKKPSSSSTTSTPA). The segment covering 961 to 970 (PLIHISKKKP) has biased composition (basic residues). The Extracellular segment spans residues 970-1183 (PSSSSTTSTP…VMTPGFFTVE (214 aa)). The segment covering 971–980 (SSSSTTSTPA) has biased composition (low complexity). 5 N-linked (GlcNAc...) asparagine glycosylation sites follow: asparagine 1017, asparagine 1047, asparagine 1078, asparagine 1087, and asparagine 1093. Residues 1184-1204 (IILGMLLVFLILMSIAGCIIY) form a helical membrane-spanning segment. Over 1205–1846 (YYIQVRYGKK…IEDNEHHPLV (642 aa)) the chain is Cytoplasmic. Residues 1246–1528 (VVLGQQCGEG…LLAAEASPEF (283 aa)) enclose the Protein kinase domain. Residues 1252 to 1260 (CGEGSFGKV) and lysine 1282 contribute to the ATP site. Aspartate 1388 acts as the Proton acceptor in catalysis. Disordered regions lie at residues 1718–1742 (ISSM…TNWS) and 1769–1826 (QQQQ…IFNG). Residues 1726–1742 (STGASSSSYGVPQTNWS) show a composition bias toward polar residues. Residues 1808–1821 (YRNNGSPSRNGNSR) show a composition bias toward low complexity.

It belongs to the protein kinase superfamily. Tyr protein kinase family. Insulin receptor subfamily. As to quaternary structure, tetramer of 2 alpha and 2 beta chains linked by disulfide bonds. The alpha chains contribute to the formation of the ligand-binding domain, while the beta chains carry the kinase domain. Interacts (via cytoplasmic domain) with shc-1 (PID domain). Interacts (via kinase domain) with daf-18 (via C-terminus). In terms of assembly, interacts with casy-1; promoting axonal localization. The cofactor is Mg(2+).

It is found in the membrane. It localises to the cell projection. The protein localises to the axon. It carries out the reaction L-tyrosyl-[protein] + ATP = O-phospho-L-tyrosyl-[protein] + ADP + H(+). Its activity is regulated as follows. Autophosphorylation activates the kinase activity. Interaction with shc-1 may inhibit its activity. Insulin receptor-like tyrosine kinase which regulates metabolism, controls longevity and prevents developmental arrest at the dauer stage. Binding of INS family members may either stimulate, or antagonize, association of the receptor with downstream mediators such as pdk-1 and age-1. Required for germline progenitor proliferation during larval development. Plays a role in maintaining gonad integrity in a daf-16/FOXO-dependent manner. Required for the response to environmental stimuli such as light, food, pheromone, and temperature. Negatively regulates resistance to UV and oxidative stress. In a daf-16/FOXO-dependent manner, plays a role in regulating the response to white light. Role in immune function and pathogen resistance. Negatively regulates autophagy. Regulates daf-18/PTEN protein levels. Plays a role in controlling seam cell development during the larval stages. Its function is as follows. Required for taste avoidance learning in the cell body of ASER gustatory neurons. Functionally, required for taste avoidance learning in axons of ASER gustatory neurons. This chain is Insulin-like receptor, found in Caenorhabditis elegans.